A 140-amino-acid polypeptide reads, in one-letter code: Fatty acid-binding protein 12 (140 aa).

A fatty acid is bound by residues R107 and 127-129 (RTY).

The protein belongs to the calycin superfamily. Fatty-acid binding protein (FABP) family. In terms of tissue distribution, expressed in a number of retinoblastoma cell lines.

Functionally, may play a role in lipid transport. This Homo sapiens (Human) protein is Fatty acid-binding protein 12 (FABP12).